The chain runs to 443 residues: Glutamyl-tRNA reductase (443 aa).

Substrate contacts are provided by residues 49–52 (TCNR), Ser-109, 114–116 (ETQ), and Gln-120. Cys-50 (nucleophile) is an active-site residue. 189 to 194 (GAGDMS) contacts NADP(+).

The protein belongs to the glutamyl-tRNA reductase family. As to quaternary structure, homodimer.

It catalyses the reaction (S)-4-amino-5-oxopentanoate + tRNA(Glu) + NADP(+) = L-glutamyl-tRNA(Glu) + NADPH + H(+). Its pathway is porphyrin-containing compound metabolism; protoporphyrin-IX biosynthesis; 5-aminolevulinate from L-glutamyl-tRNA(Glu): step 1/2. Its function is as follows. Catalyzes the NADPH-dependent reduction of glutamyl-tRNA(Glu) to glutamate 1-semialdehyde (GSA). The sequence is that of Glutamyl-tRNA reductase from Staphylococcus saprophyticus subsp. saprophyticus (strain ATCC 15305 / DSM 20229 / NCIMB 8711 / NCTC 7292 / S-41).